We begin with the raw amino-acid sequence, 284 residues long: F-box protein PP2-B13 (284 aa).

Positions 1–44 constitute an F-box domain; the sequence is MMMLPEACVANILAFTSPADAFSSSEVSSVFRLAGDSDFVWEKF.

The sequence is that of F-box protein PP2-B13 (PP2B13) from Arabidopsis thaliana (Mouse-ear cress).